We begin with the raw amino-acid sequence, 74 residues long: Conotoxin MiEr93 (74 aa).

Positions 1–22 (MKLTCVLIIAVLFLTAYQLATA) are cleaved as a signal peptide. Positions 23–45 (ASYAKGKQKHRALRPADKHLRLT) are excised as a propeptide. 3 cysteine pairs are disulfide-bonded: Cys-48/Cys-62, Cys-55/Cys-66, and Cys-61/Cys-73.

It belongs to the conotoxin O1 superfamily. In terms of tissue distribution, expressed by the venom duct.

It is found in the secreted. This chain is Conotoxin MiEr93, found in Conus miles (Soldier cone).